The following is a 253-amino-acid chain: Leucyl/phenylalanyl-tRNA--protein transferase (253 aa).

This sequence belongs to the L/F-transferase family.

It is found in the cytoplasm. It carries out the reaction N-terminal L-lysyl-[protein] + L-leucyl-tRNA(Leu) = N-terminal L-leucyl-L-lysyl-[protein] + tRNA(Leu) + H(+). It catalyses the reaction N-terminal L-arginyl-[protein] + L-leucyl-tRNA(Leu) = N-terminal L-leucyl-L-arginyl-[protein] + tRNA(Leu) + H(+). The catalysed reaction is L-phenylalanyl-tRNA(Phe) + an N-terminal L-alpha-aminoacyl-[protein] = an N-terminal L-phenylalanyl-L-alpha-aminoacyl-[protein] + tRNA(Phe). In terms of biological role, functions in the N-end rule pathway of protein degradation where it conjugates Leu, Phe and, less efficiently, Met from aminoacyl-tRNAs to the N-termini of proteins containing an N-terminal arginine or lysine. This chain is Leucyl/phenylalanyl-tRNA--protein transferase, found in Bordetella petrii (strain ATCC BAA-461 / DSM 12804 / CCUG 43448).